A 460-amino-acid polypeptide reads, in one-letter code: 3-isopropylmalate dehydratase large subunit (460 aa).

3 residues coordinate [4Fe-4S] cluster: cysteine 338, cysteine 398, and cysteine 401.

It belongs to the aconitase/IPM isomerase family. LeuC type 1 subfamily. In terms of assembly, heterodimer of LeuC and LeuD. The cofactor is [4Fe-4S] cluster.

The catalysed reaction is (2R,3S)-3-isopropylmalate = (2S)-2-isopropylmalate. Its pathway is amino-acid biosynthesis; L-leucine biosynthesis; L-leucine from 3-methyl-2-oxobutanoate: step 2/4. Its function is as follows. Catalyzes the isomerization between 2-isopropylmalate and 3-isopropylmalate, via the formation of 2-isopropylmaleate. The chain is 3-isopropylmalate dehydratase large subunit from Streptococcus gordonii (strain Challis / ATCC 35105 / BCRC 15272 / CH1 / DL1 / V288).